A 464-amino-acid chain; its full sequence is Argininosuccinate lyase (464 aa).

An N-acetylalanine modification is found at A2. K7 carries the N6-acetyllysine modification. S27 contributes to the 2-(N(omega)-L-arginino)succinate binding site. The residue at position 69 (K69) is an N6-acetyllysine. Residues N114 and T159 each contribute to the 2-(N(omega)-L-arginino)succinate site. H160 (proton acceptor) is an active-site residue. Catalysis depends on S281, which acts as the Proton donor. At K288 the chain carries N6-acetyllysine. 2-(N(omega)-L-arginino)succinate is bound by residues N289, Y321, Q326, and K329.

The protein belongs to the lyase 1 family. Argininosuccinate lyase subfamily. In terms of assembly, homotetramer. Forms tissue-specific complexes with ASS1, SLC7A1, HSP90AA1 and nitric oxide synthase NOS1, NOS2 or NOS3; the complex maintenance is independent of ASL catalytic function. Post-translationally, acetylation modifies enzyme activity in response to alterations of extracellular nutrient availability. Acetylation increased with trichostin A (TSA) or with nicotinamide (NAM). Glucose increases acetylation by about a factor of 3 with decreasing enzyme activity. Acetylation on Lys-288 is decreased on the addition of extra amino acids resulting in activation of enzyme activity. Expressed in lung and brain (at protein level).

It carries out the reaction 2-(N(omega)-L-arginino)succinate = fumarate + L-arginine. It participates in amino-acid biosynthesis; L-arginine biosynthesis; L-arginine from L-ornithine and carbamoyl phosphate: step 3/3. It functions in the pathway nitrogen metabolism; urea cycle; L-arginine and fumarate from (N(omega)-L-arginino)succinate: step 1/1. Enzyme activity is regulated by acetylation. Functionally, catalyzes the reversible cleavage of L-argininosuccinate to fumarate and L-arginine, an intermediate step reaction in the urea cycle mostly providing for hepatic nitrogen detoxification into excretable urea as well as de novo L-arginine synthesis in nonhepatic tissues. Essential regulator of intracellular and extracellular L-arginine pools. As part of citrulline-nitric oxide cycle, forms tissue-specific multiprotein complexes with argininosuccinate synthase ASS1, transport protein SLC7A1 and nitric oxide synthase NOS1, NOS2 or NOS3, allowing for cell-autonomous L-arginine synthesis while channeling extracellular L-arginine to nitric oxide synthesis pathway. This is Argininosuccinate lyase (Asl) from Mus musculus (Mouse).